The chain runs to 196 residues: Imidazole glycerol phosphate synthase subunit HisH (196 aa).

A Glutamine amidotransferase type-1 domain is found at 2 to 196 (NVVILDTGCA…AKLLKNFLEM (195 aa)). Cysteine 77 functions as the Nucleophile in the catalytic mechanism. Active-site residues include histidine 178 and glutamate 180.

In terms of assembly, heterodimer of HisH and HisF.

The protein localises to the cytoplasm. The enzyme catalyses 5-[(5-phospho-1-deoxy-D-ribulos-1-ylimino)methylamino]-1-(5-phospho-beta-D-ribosyl)imidazole-4-carboxamide + L-glutamine = D-erythro-1-(imidazol-4-yl)glycerol 3-phosphate + 5-amino-1-(5-phospho-beta-D-ribosyl)imidazole-4-carboxamide + L-glutamate + H(+). It carries out the reaction L-glutamine + H2O = L-glutamate + NH4(+). It participates in amino-acid biosynthesis; L-histidine biosynthesis; L-histidine from 5-phospho-alpha-D-ribose 1-diphosphate: step 5/9. In terms of biological role, IGPS catalyzes the conversion of PRFAR and glutamine to IGP, AICAR and glutamate. The HisH subunit catalyzes the hydrolysis of glutamine to glutamate and ammonia as part of the synthesis of IGP and AICAR. The resulting ammonia molecule is channeled to the active site of HisF. The protein is Imidazole glycerol phosphate synthase subunit HisH of Shigella dysenteriae serotype 1 (strain Sd197).